A 506-amino-acid polypeptide reads, in one-letter code: Glutamate--tRNA ligase (506 aa).

Residues 14–24 (PSPTGYLHIGG) carry the 'HIGH' region motif. Residues 261 to 265 (KLSKR) carry the 'KMSKS' region motif. Lysine 264 lines the ATP pocket.

It belongs to the class-I aminoacyl-tRNA synthetase family. Glutamate--tRNA ligase type 1 subfamily. Monomer.

It is found in the cytoplasm. It catalyses the reaction tRNA(Glu) + L-glutamate + ATP = L-glutamyl-tRNA(Glu) + AMP + diphosphate. Functionally, catalyzes the attachment of glutamate to tRNA(Glu) in a two-step reaction: glutamate is first activated by ATP to form Glu-AMP and then transferred to the acceptor end of tRNA(Glu). The polypeptide is Glutamate--tRNA ligase (Roseiflexus sp. (strain RS-1)).